Consider the following 348-residue polypeptide: Phenylalanine--tRNA ligase alpha subunit (348 aa).

Glu-259 is a binding site for Mg(2+).

This sequence belongs to the class-II aminoacyl-tRNA synthetase family. Phe-tRNA synthetase alpha subunit type 1 subfamily. As to quaternary structure, tetramer of two alpha and two beta subunits. It depends on Mg(2+) as a cofactor.

It is found in the cytoplasm. It catalyses the reaction tRNA(Phe) + L-phenylalanine + ATP = L-phenylalanyl-tRNA(Phe) + AMP + diphosphate + H(+). The chain is Phenylalanine--tRNA ligase alpha subunit from Lactiplantibacillus plantarum (strain ATCC BAA-793 / NCIMB 8826 / WCFS1) (Lactobacillus plantarum).